The chain runs to 433 residues: Tyrosine--tRNA ligase (433 aa).

Tyr34 contacts L-tyrosine. Residues 39 to 48 (PTASSLHVGS) carry the 'HIGH' region motif. The L-tyrosine site is built by Tyr169 and Gln173. The short motif at 229–233 (KMGKT) is the 'KMSKS' region element. Lys232 is an ATP binding site. An S4 RNA-binding domain is found at 364 to 432 (IPAFVLFHTV…RYHTIVVRKG (69 aa)).

It belongs to the class-I aminoacyl-tRNA synthetase family. TyrS type 1 subfamily. Homodimer.

It is found in the cytoplasm. It carries out the reaction tRNA(Tyr) + L-tyrosine + ATP = L-tyrosyl-tRNA(Tyr) + AMP + diphosphate + H(+). Catalyzes the attachment of tyrosine to tRNA(Tyr) in a two-step reaction: tyrosine is first activated by ATP to form Tyr-AMP and then transferred to the acceptor end of tRNA(Tyr). This chain is Tyrosine--tRNA ligase, found in Desulfosudis oleivorans (strain DSM 6200 / JCM 39069 / Hxd3) (Desulfococcus oleovorans).